Consider the following 429-residue polypeptide: Aspartate--tRNA(Asp/Asn) ligase (429 aa).

Position 166 (Glu-166) interacts with L-aspartate. The segment at 188-191 (QLYK) is aspartate. Arg-210 contacts L-aspartate. ATP-binding positions include 210 to 212 (RAE), 218 to 220 (RHL), and Glu-352. Positions 352 and 355 each coordinate Mg(2+). L-aspartate is bound by residues Ser-355 and Arg-359. 400–403 (GIER) provides a ligand contact to ATP.

Belongs to the class-II aminoacyl-tRNA synthetase family. Type 2 subfamily. Homodimer. Mg(2+) serves as cofactor.

The protein localises to the cytoplasm. It carries out the reaction tRNA(Asx) + L-aspartate + ATP = L-aspartyl-tRNA(Asx) + AMP + diphosphate. Its function is as follows. Aspartyl-tRNA synthetase with relaxed tRNA specificity since it is able to aspartylate not only its cognate tRNA(Asp) but also tRNA(Asn). Reaction proceeds in two steps: L-aspartate is first activated by ATP to form Asp-AMP and then transferred to the acceptor end of tRNA(Asp/Asn). The chain is Aspartate--tRNA(Asp/Asn) ligase from Methanoculleus marisnigri (strain ATCC 35101 / DSM 1498 / JR1).